The chain runs to 158 residues: Hypoxanthine DNA glycosylase (158 aa).

The active site involves N39.

The protein belongs to the uracil-DNA glycosylase (UDG) superfamily. Type 6 (HDG) family.

Functionally, excises hypoxanthine, a deamination product of adenine, from double-stranded DNA. Acts on double-stranded DNA containing G/I, T/I, A/I and C/I base pairs, but not on single-stranded inosine-containing DNA. Also has minor xanthine DNA glycosylase activity. Lacks any detectable uracil-DNA glycosylase activity. The protein is Hypoxanthine DNA glycosylase of Methanosarcina barkeri (strain Fusaro / DSM 804).